The primary structure comprises 85 residues: Neurotoxin beta-KTx 17 (85 aa).

Positions 1–20 (MKQYIFFLALIVLVSTFAEA) are cleaved as a signal peptide. The propeptide occupies 21–37 (GKKTEILDKVKKVFSKG). Residues 49–85 (ELGCPFIEKWCEDHCESKKQVGKCENFDCSCVKLGGK) enclose the BetaSPN-type CS-alpha/beta domain. Cystine bridges form between Cys-52/Cys-72, Cys-59/Cys-77, and Cys-63/Cys-79.

This sequence belongs to the long chain scorpion toxin family. Class 2 subfamily. As to expression, expressed by the venom gland.

It is found in the secreted. Its function is as follows. Has a very weak effect to block voltage-gated potassium channel Kv1.1/KCNA1. The protein is Neurotoxin beta-KTx 17 of Lychas mucronatus (Chinese swimming scorpion).